Here is a 380-residue protein sequence, read N- to C-terminus: Cytochrome b (380 aa).

Transmembrane regions (helical) follow at residues 33–53, 77–98, 113–133, and 178–198; these read FGSL…FLAM, WLIR…YLHI, WTIG…GYVL, and FFAF…IHLL. 2 residues coordinate heme b: His-83 and His-97. His-182 and His-196 together coordinate heme b. Residue His-201 coordinates a ubiquinone. 4 helical membrane passes run 226-246, 288-308, 320-340, and 347-367; these read YKDL…ALFS, LGGV…PFLH, VTQF…WIGG, and FVII…VLIP.

Belongs to the cytochrome b family. The cytochrome bc1 complex contains 3 respiratory subunits (MT-CYB, CYC1 and UQCRFS1), 2 core proteins (UQCRC1 and UQCRC2) and probably 6 low-molecular weight proteins. Requires heme b as cofactor.

Its subcellular location is the mitochondrion inner membrane. Component of the ubiquinol-cytochrome c reductase complex (complex III or cytochrome b-c1 complex) that is part of the mitochondrial respiratory chain. The b-c1 complex mediates electron transfer from ubiquinol to cytochrome c. Contributes to the generation of a proton gradient across the mitochondrial membrane that is then used for ATP synthesis. The sequence is that of Cytochrome b (mt-cyb) from Kareius bicoloratus (Stone flounder).